The sequence spans 790 residues: Solute carrier family 26 member 9 (790 aa).

Topologically, residues 1–70 are cytoplasmic; the sequence is MNQPRPRYVV…WLPKYKIKDY (70 aa). A helical transmembrane segment spans residues 71–96; it reads IIPDLLGGLSGGCIQVPQGMAFALLA. Over 97 to 100 the chain is Extracellular; that stretch reads NLPA. The helical transmembrane segment at 101–109 threads the bilayer; it reads VNGLYSSFF. The Cytoplasmic portion of the chain corresponds to 110–129; sequence PLLTYFFLGGIHQMVPGTFA. Residues 130–142 traverse the membrane as a helical segment; the sequence is VISILVGNICLQL. Residues 143–162 are Extracellular-facing; sequence APESKFQIFNNVTNETYVDT. The helical transmembrane segment at 163–191 threads the bilayer; it reads AAMEAERLHVSATLACLTAVIQMALGFMQ. The Cytoplasmic segment spans residues 192 to 201; it reads FGFVAIYLSE. Residues 202-224 form a helical membrane-spanning segment; it reads SFIRGFMTAAGLQILISVLKYIF. The Extracellular segment spans residues 225–237; it reads GLTIPSYTGPGSI. Residues 238–246 constitute an intramembrane region (helical); the sequence is VFTFIDICK. The Extracellular segment spans residues 247-254; it reads NLPHTNIA. The chain crosses the membrane as a helical span at residues 255-275; it reads SLIFALVSGVFLVLVKELNAR. Over 276–286 the chain is Cytoplasmic; it reads YMHKIHFPIPT. Residues 287–299 form a helical membrane-spanning segment; it reads EMIVVVVATAISG. Topologically, residues 300 to 334 are extracellular; that stretch reads SCKMPKKYHMQIVGEIRQGFPTPVAPMVSQWKGMV. The chain crosses the membrane as a helical span at residues 335–358; it reads GTAFSLAIVGYVINLAMGRTLASK. The Cytoplasmic portion of the chain corresponds to 359–365; that stretch reads HGYDVDS. A helical transmembrane segment spans residues 366–379; that stretch reads NQEMIALGCSNFFG. At 380–390 the chain is on the extracellular side; it reads SFFKIHVICCA. The helical transmembrane segment at 391-400 threads the bilayer; sequence LSVTLAVDGA. The Cytoplasmic portion of the chain corresponds to 401–405; it reads GGKSQ. The helical transmembrane segment at 406–419 threads the bilayer; it reads VASLCVSLVVMITM. Residues 420–431 are Extracellular-facing; sequence LVLGSYLYPLPK. Residues 432–457 form a helical membrane-spanning segment; that stretch reads AVLGALIAVNLKNSLKQLTDPYYLWR. The Cytoplasmic segment spans residues 458 to 461; sequence KSKL. The chain crosses the membrane as a helical span at residues 462–476; the sequence is DCCVWVVSFLSSFFL. Residues 477–479 are Extracellular-facing; it reads SLP. The chain crosses the membrane as a helical span at residues 480–498; sequence YGVAVGVAFSILVVIFQTQ. Topologically, residues 499 to 790 are cytoplasmic; it reads FRNGSTLAQV…MFHTETLTAL (292 aa). Positions 519–737 constitute an STAS domain; the sequence is TYNRAQEIAG…PSIHDAVLFA (219 aa).

It belongs to the SLC26A/SulP transporter (TC 2.A.53) family. In terms of assembly, homodimer. In terms of tissue distribution, expressed in stomach and trachea. Abundantly expressed in the apical domain of the surface epithelial cells and the deep cells in the gastric gland. Also expressed in heart, brain, lung and liver.

It localises to the cell membrane. Its subcellular location is the endomembrane system. It catalyses the reaction chloride(in) = chloride(out). It carries out the reaction hydrogencarbonate(in) + chloride(out) = hydrogencarbonate(out) + chloride(in). With respect to regulation, inhibited by ammonium and thiosulfate. Functionally, ion transporter that can act both as an ion channel and anion exchanger. Mainly acts as a chloride channel, which mediate uncoupled chloride anion transport in an alternate-access mechanism where a saturable binding site is alternately exposed to either one or the other side of the membrane. Also acts as a DIDS- and thiosulfate- sensitive anion exchanger the exchange of chloride for bicarbonate ions across the cell membrane. The protein is Solute carrier family 26 member 9 of Mus musculus (Mouse).